A 583-amino-acid chain; its full sequence is MTTSSIRRQMKNIVNSYSEAEIKVREATSNDPWGPSSSLMTEIADLTYNVVRFSEIMSMVWKRLNDHGKNWRHVYKALTLLDYLIKTGSERVAQQCRENIFAIQTLKDFQYIDRDGKDQGINVREKSKQLVALLKDEERLKVERVQALKTKERMAQVATGVGSNQITFGRGSSQPNLSISHSEQEYGKAGGSPASYHGSTSPRVSSELEQARPQTSGEEELQLQLALAMSREVAEQEERLRRGDDLRLQMALEESRRDTVKVPKKKEVKACCKPGSHSQQTTLLDLMDALPSSGPVAQKTEPWSTGTPANQTNPWGGTVAPANISDPWPSFGTKPAASVDPWGVPTTASIQSVPKNSDPWAASQQPASDAGKTADAWGAAKPSPASGSFELFSNFNGTVKDDFSEFDNLRTSKKPAESGASVPPQDSRTTSPDLFESQSLTSASSKPSSARKTPESFLGPNAALVNLDSLVTKPAPPAQSLNPFLAPGAAAPAPVNPFQVNQPQPLTLNQLRGSPVLGSSASFGSGPGVETVAPMPSVAPHSALGATGSSLTPLGPTAMNMVGSMGIPPSAAQPAGTTNPFLL.

A 1,2-diacyl-sn-glycero-3-phospho-(1D-myo-inositol-4,5-bisphosphate) contacts are provided by Arg8, Lys11, Arg25, Asn30, Arg63, and His73. The region spanning 12 to 144 (NIVNSYSEAE…KDEERLKVER (133 aa)) is the ENTH domain. The span at 165–181 (QITFGRGSSQPNLSISH) shows a compositional bias: polar residues. The disordered stretch occupies residues 165–217 (QITFGRGSSQPNLSISHSEQEYGKAGGSPASYHGSTSPRVSSELEQARPQTSG). Arg170 bears the Omega-N-methylarginine mark. Phosphoserine occurs at positions 173, 192, and 195. Residues 197–216 (HGSTSPRVSSELEQARPQTS) show a composition bias toward polar residues. 2 UIM domains span residues 218–237 (EEEL…AEQE) and 243–262 (GDDL…TVKV). Disordered regions lie at residues 293 to 384 (SGPV…KPSP) and 411 to 457 (TSKK…PESF). Tandem repeats lie at residues 301-303 (EPW), 313-315 (NPW), 326-328 (DPW), and 340-342 (DPW). Over residues 301–315 (EPWSTGTPANQTNPW) the composition is skewed to polar residues. The segment at 301 to 377 (EPWSTGTPAN…SDAGKTADAW (77 aa)) is 6 X 3 AA repeats of [DE]-P-W. The segment covering 346 to 355 (TTASIQSVPK) has biased composition (polar residues). A run of 2 repeats spans residues 358-360 (DPW) and 375-377 (DAW). Ser431 carries the phosphoserine modification. The span at 437–448 (SQSLTSASSKPS) shows a compositional bias: low complexity. Thr453 is subject to Phosphothreonine. Repeat copies occupy residues 482 to 484 (NPF) and 496 to 498 (NPF). The 3 X 3 AA repeats of N-P-F stretch occupies residues 482–581 (NPFLAPGAAA…AQPAGTTNPF (100 aa)). Phosphoserine is present on Ser514. The stretch at 579–581 (NPF) is repeat 3.

This sequence belongs to the epsin family. Binds AP-2 and clathrin. Interacts with ITSN1. Interacts with UBQLN2. Binds EPS15. Post-translationally, ubiquitinated. In terms of tissue distribution, highly expressed in brain. Detected at lower levels in lung, liver, muscle and testis.

Its subcellular location is the cytoplasm. Its function is as follows. Plays a role in the formation of clathrin-coated invaginations and endocytosis. The sequence is that of Epsin-2 (Epn2) from Rattus norvegicus (Rat).